We begin with the raw amino-acid sequence, 419 residues long: Phospho-N-acetylmuramoyl-pentapeptide-transferase (419 aa).

10 consecutive transmembrane segments (helical) span residues 22–42 (YVSF…TAIG), 72–92 (TPTM…LLCA), 94–114 (LNNI…ALGF), 135–155 (IVGQ…SPDV), 210–230 (AAWL…SNGA), 238–258 (GLAA…AYMS), 266–286 (FLNI…AAFI), 303–323 (FMGD…AIII), 327–347 (LLIP…MLQV), and 396–416 (KIVV…IVTL).

This sequence belongs to the glycosyltransferase 4 family. MraY subfamily. It depends on Mg(2+) as a cofactor.

The protein resides in the cell inner membrane. The enzyme catalyses UDP-N-acetyl-alpha-D-muramoyl-L-alanyl-gamma-D-glutamyl-meso-2,6-diaminopimeloyl-D-alanyl-D-alanine + di-trans,octa-cis-undecaprenyl phosphate = di-trans,octa-cis-undecaprenyl diphospho-N-acetyl-alpha-D-muramoyl-L-alanyl-D-glutamyl-meso-2,6-diaminopimeloyl-D-alanyl-D-alanine + UMP. The protein operates within cell wall biogenesis; peptidoglycan biosynthesis. Catalyzes the initial step of the lipid cycle reactions in the biosynthesis of the cell wall peptidoglycan: transfers peptidoglycan precursor phospho-MurNAc-pentapeptide from UDP-MurNAc-pentapeptide onto the lipid carrier undecaprenyl phosphate, yielding undecaprenyl-pyrophosphoryl-MurNAc-pentapeptide, known as lipid I. The chain is Phospho-N-acetylmuramoyl-pentapeptide-transferase from Parabacteroides distasonis (strain ATCC 8503 / DSM 20701 / CIP 104284 / JCM 5825 / NCTC 11152).